The chain runs to 426 residues: Glutamate-1-semialdehyde 2,1-aminomutase (426 aa).

Lys-265 is modified (N6-(pyridoxal phosphate)lysine).

Belongs to the class-III pyridoxal-phosphate-dependent aminotransferase family. HemL subfamily. As to quaternary structure, homodimer. The cofactor is pyridoxal 5'-phosphate.

The protein resides in the cytoplasm. The catalysed reaction is (S)-4-amino-5-oxopentanoate = 5-aminolevulinate. It functions in the pathway porphyrin-containing compound metabolism; protoporphyrin-IX biosynthesis; 5-aminolevulinate from L-glutamyl-tRNA(Glu): step 2/2. The protein is Glutamate-1-semialdehyde 2,1-aminomutase of Methylococcus capsulatus (strain ATCC 33009 / NCIMB 11132 / Bath).